A 467-amino-acid chain; its full sequence is Putative gluconeogenesis factor (467 aa).

Pro residues predominate over residues 1 to 12 (MSAPPAPPPDRS). A disordered region spans residues 1–27 (MSAPPAPPPDRSAPPDRTDSAQTEPTR).

It belongs to the gluconeogenesis factor family.

The protein localises to the cytoplasm. Functionally, required for morphogenesis under gluconeogenic growth conditions. The protein is Putative gluconeogenesis factor of Deinococcus radiodurans (strain ATCC 13939 / DSM 20539 / JCM 16871 / CCUG 27074 / LMG 4051 / NBRC 15346 / NCIMB 9279 / VKM B-1422 / R1).